The sequence spans 195 residues: Probable GTP-binding protein EngB (195 aa).

An EngB-type G domain is found at 24–195 (ELPEIALAGR…EAWDAILEKL (172 aa)). GTP-binding positions include 32–39 (GRSNVGKS), 59–63 (GKTQL), 77–80 (DVPG), 144–147 (TKAD), and 176–178 (FSS). Positions 39 and 61 each coordinate Mg(2+).

Belongs to the TRAFAC class TrmE-Era-EngA-EngB-Septin-like GTPase superfamily. EngB GTPase family. Requires Mg(2+) as cofactor.

Functionally, necessary for normal cell division and for the maintenance of normal septation. The chain is Probable GTP-binding protein EngB from Streptococcus pneumoniae (strain Hungary19A-6).